A 434-amino-acid polypeptide reads, in one-letter code: Glutamyl-tRNA reductase (434 aa).

Substrate contacts are provided by residues 54–57 (TCNR), Ser113, 118–120 (EAQ), and Gln124. Cys55 serves as the catalytic Nucleophile. NADP(+) is bound at residue 193-198 (GGGEVS).

Belongs to the glutamyl-tRNA reductase family. Homodimer.

It carries out the reaction (S)-4-amino-5-oxopentanoate + tRNA(Glu) + NADP(+) = L-glutamyl-tRNA(Glu) + NADPH + H(+). Its pathway is porphyrin-containing compound metabolism; protoporphyrin-IX biosynthesis; 5-aminolevulinate from L-glutamyl-tRNA(Glu): step 1/2. It participates in porphyrin-containing compound metabolism; chlorophyll biosynthesis. Its function is as follows. Catalyzes the NADPH-dependent reduction of glutamyl-tRNA(Glu) to glutamate 1-semialdehyde (GSA). In Chloroflexus aurantiacus (strain ATCC 29366 / DSM 635 / J-10-fl), this protein is Glutamyl-tRNA reductase.